Consider the following 187-residue polypeptide: Elongation factor P (187 aa).

The protein belongs to the elongation factor P family.

Its subcellular location is the cytoplasm. It participates in protein biosynthesis; polypeptide chain elongation. Involved in peptide bond synthesis. Stimulates efficient translation and peptide-bond synthesis on native or reconstituted 70S ribosomes in vitro. Probably functions indirectly by altering the affinity of the ribosome for aminoacyl-tRNA, thus increasing their reactivity as acceptors for peptidyl transferase. In Corynebacterium diphtheriae (strain ATCC 700971 / NCTC 13129 / Biotype gravis), this protein is Elongation factor P.